The sequence spans 187 residues: Ribonuclease HII (187 aa).

An RNase H type-2 domain is found at 1-187; it reads MICGTDEAGR…NPVKRLLANL (187 aa). A divalent metal cation contacts are provided by D6, E7, and D98.

Belongs to the RNase HII family. It depends on Mn(2+) as a cofactor. The cofactor is Mg(2+).

It localises to the cytoplasm. The enzyme catalyses Endonucleolytic cleavage to 5'-phosphomonoester.. Functionally, endonuclease that specifically degrades the RNA of RNA-DNA hybrids. The protein is Ribonuclease HII of Idiomarina loihiensis (strain ATCC BAA-735 / DSM 15497 / L2-TR).